A 415-amino-acid chain; its full sequence is MKLSLSKVTSGARLGVISNFGRNGDKTLEVPGCLLYTKTASPPHLTHDTLQTIEGVPAVTHITLSTLAEHQEVLEEYKEGIGKFAGLPDAVFYCSTHDPVSPCPTGYNTNKAVSLWGSGGRIEMTTQKFISAQRVLRPDWFQCLSDGEVTPGGNSRKRIKKSVDRSLVFLDECLQLLSEHEELKPCVLIGAVEGGDLLDERLRSARETAKRPVGGFLLDGFHGISAGNEAKLSLVSAVTAELPEDKPRFIHGVGRPDEVLEFIQRGVDLFDSCFPYQVTERGCALIFTHCHRPDPETAVLEKSEMSDTERNGDVGAEIEEPDADQAEMTPFEICLKEKRFREDFGPLLEGCTCYCCRNHSRAYVHHLLMAKELLAGILLMIHNFQHYFSFFSSIRAALRDGEIKALAELIRKQNS.

Zn(2+) is bound by residues Cys-351, Cys-353, Cys-356, and His-382.

Belongs to the queuine tRNA-ribosyltransferase family. QTRT2 subfamily. In terms of assembly, heterodimer of a catalytic subunit qtrt1 and an accessory subunit qtrt2. It depends on Zn(2+) as a cofactor.

It localises to the cytoplasm. Its subcellular location is the mitochondrion outer membrane. Non-catalytic subunit of the queuine tRNA-ribosyltransferase (TGT) that catalyzes the base-exchange of a guanine (G) residue with queuine (Q) at position 34 (anticodon wobble position) in tRNAs with GU(N) anticodons (tRNA-Asp, -Asn, -His and -Tyr), resulting in the hypermodified nucleoside queuosine (7-(((4,5-cis-dihydroxy-2-cyclopenten-1-yl)amino)methyl)-7-deazaguanosine). The chain is Queuine tRNA-ribosyltransferase accessory subunit 2 from Xenopus laevis (African clawed frog).